The following is a 157-amino-acid chain: Small ribosomal subunit protein uS7 (157 aa).

The protein belongs to the universal ribosomal protein uS7 family. In terms of assembly, part of the 30S ribosomal subunit. Contacts proteins S9 and S11.

Functionally, one of the primary rRNA binding proteins, it binds directly to 16S rRNA where it nucleates assembly of the head domain of the 30S subunit. Is located at the subunit interface close to the decoding center, probably blocks exit of the E-site tRNA. The chain is Small ribosomal subunit protein uS7 from Leptospira interrogans serogroup Icterohaemorrhagiae serovar copenhageni (strain Fiocruz L1-130).